A 178-amino-acid polypeptide reads, in one-letter code: Ribosome maturation factor RimM (178 aa).

The PRC barrel domain occupies 100 to 178 (AADEYYWYQL…VMRVEWDADF (79 aa)).

This sequence belongs to the RimM family. Binds ribosomal protein uS19.

Its subcellular location is the cytoplasm. In terms of biological role, an accessory protein needed during the final step in the assembly of 30S ribosomal subunit, possibly for assembly of the head region. Essential for efficient processing of 16S rRNA. May be needed both before and after RbfA during the maturation of 16S rRNA. It has affinity for free ribosomal 30S subunits but not for 70S ribosomes. The chain is Ribosome maturation factor RimM from Pseudomonas putida (strain W619).